The chain runs to 832 residues: FAST kinase domain-containing protein 1, mitochondrial (832 aa).

The 61-residue stretch at 765–825 folds into the RAP domain; it reads VAIEFLDSKA…KDAWMDYLRK (61 aa).

Belongs to the FAST kinase family.

Its subcellular location is the mitochondrion. In terms of biological role, may regulate the stability of some mitochondrial mRNA species. The polypeptide is FAST kinase domain-containing protein 1, mitochondrial (fastkd1) (Xenopus laevis (African clawed frog)).